A 716-amino-acid polypeptide reads, in one-letter code: Ciliary WD repeat-containing protein ctxp80 (716 aa).

The disordered stretch occupies residues 1–53; that stretch reads MGCGGSSGASDPSSEKINWNNAEIHDEFKQEQKKAGAKRKAFDKTTGKAVEKE. A compositionally biased stretch (polar residues) spans 8-21; the sequence is GASDPSSEKINWNN. Over residues 23–53 the composition is skewed to basic and acidic residues; it reads EIHDEFKQEQKKAGAKRKAFDKTTGKAVEKE. WD repeat units follow at residues 167 to 208, 213 to 254, 257 to 297, 305 to 343, 345 to 382, 424 to 462, 529 to 568, 571 to 610, 639 to 678, and 683 to 715; these read YHTN…KKGR, KGGR…QVKK, SGPD…FKKK, GKPTSHSCVCWDDAGNAYSGGANSSIYVWSGQNLTSTYD, HGKGFVGAIRWCDGKIISGGKDGQIIISNPADGKAEKT, HSDGEAWGLAVADKDTFVTSGDDNKIYVWDLKNRKSTAL, DSGEWIECMAYSPDGSMLAVGSHDNNIYIYSSADYSKLGT, AHNSFIVSLDWSSDGTYIRSVCGAHELLFFTVEDFKQDPS, TDGTHINHVDFSSSGSLIVTADDYGLVNVWRNPARAGATP, and GHSEHVVRTYFTQGESYILSIGGYDKTIMQWKK.

Belongs to the WD repeat EMAP family.

This is Ciliary WD repeat-containing protein ctxp80 from Euplotoides octocarinatus (Freshwater ciliate).